A 704-amino-acid polypeptide reads, in one-letter code: Fatty acid oxidation complex subunit alpha (704 aa).

The interval 1–190 (MSEQKAFSLK…KLGVVDACVP (190 aa)) is enoyl-CoA hydratase. The 3-hydroxyacyl-CoA dehydrogenase stretch occupies residues 308-704 (TAVNKVGVLG…RAGEGRNFYD (397 aa)).

This sequence in the N-terminal section; belongs to the enoyl-CoA hydratase/isomerase family. The protein in the central section; belongs to the 3-hydroxyacyl-CoA dehydrogenase family. As to quaternary structure, heterotetramer of two alpha chains (FadJ) and two beta chains (FadI).

The protein resides in the cytoplasm. The enzyme catalyses a (3S)-3-hydroxyacyl-CoA = a (2E)-enoyl-CoA + H2O. It catalyses the reaction a 4-saturated-(3S)-3-hydroxyacyl-CoA = a (3E)-enoyl-CoA + H2O. It carries out the reaction a (3S)-3-hydroxyacyl-CoA + NAD(+) = a 3-oxoacyl-CoA + NADH + H(+). The catalysed reaction is (3S)-3-hydroxybutanoyl-CoA = (3R)-3-hydroxybutanoyl-CoA. It participates in lipid metabolism; fatty acid beta-oxidation. Functionally, catalyzes the formation of a hydroxyacyl-CoA by addition of water on enoyl-CoA. Also exhibits 3-hydroxyacyl-CoA epimerase and 3-hydroxyacyl-CoA dehydrogenase activities. In Vibrio campbellii (strain ATCC BAA-1116), this protein is Fatty acid oxidation complex subunit alpha.